The chain runs to 326 residues: Fructose operon regulatory protein (326 aa).

The HTH lacI-type domain maps to 1 to 58; it reads MTLDEIAKLAGVSKTTASYVINGKAQKYRISEKTQHKVMAVVEQYNFRPDHAASALRA. The segment at residues 3–22 is a DNA-binding region (H-T-H motif); sequence LDEIAKLAGVSKTTASYVIN.

In terms of assembly, homodimer.

Interaction with F1P may induce a structural change in the DNA spacer region between the -35 and -10 elements, thereby facilitating RNAP binding to the promoter to trigger the transcriptional activation of the fru operon. Interaction with F1P does not release FruR from its binding sequence. In terms of biological role, regulates the expression of the fruBKA (fru) operon, which encodes proteins involved in the import and metabolism of fructose. In the absence of fructose 1-phosphate (F1P), binds to the promoter region of fruB, interferes with the binding of the RNA polymerase (RNAP) to the promoter and represses the expression of the operon. In the presence of F1P, activates the transcription of the fru operon by facilitating the binding of RNAP to the promoter. Essential for the expression of the fru operon and thus for growth on fructose. The sequence is that of Fructose operon regulatory protein from Vibrio cholerae serotype O1 (strain ATCC 39315 / El Tor Inaba N16961).